The sequence spans 593 residues: Potassium channel KAT6 (593 aa).

Residues 1 to 33 (MAASRSELLRPAFGEPSPSLGPFVVNPHTCSYR) are Cytoplasmic-facing. A helical transmembrane segment spans residues 34–54 (WWQKFLIVLVLYTAWASPFEL). Residues 55 to 64 (AMEKSASAAL) lie on the Extracellular side of the membrane. Residues 65-85 (AVTELVVDAFFAVDIAVSFFV) traverse the membrane as a helical segment. Over 86–106 (AYRDASTGLLVTDRKKIATRH) the chain is Cytoplasmic. A helical membrane pass occupies residues 107–129 (LARPCLALDVASTIPLQMIYRIV). Residues 130–138 (SGKRQALYG) lie on the Extracellular side of the membrane. A helical; Voltage-sensor membrane pass occupies residues 139–159 (LLNLLRLWRLRRVSKLFARLE). Over 160-173 (KDIRFSYLWTRLIK) the chain is Cytoplasmic. The helical transmembrane segment at 174–194 (LLYVTLFAVHFASCIYLWMAF) threads the bilayer. Over 195 to 221 (HHKAKELTWIGSQFHGFEDRSVWFCYT) the chain is Extracellular. An intramembrane region (pore-forming) is located at residues 222-241 (CAVYWSITTLATVGYGDLHA). At 242–247 (ANTGEM) the chain is on the extracellular side. Residues 248 to 268 (LFSIAFMLFNMGLTSYIIGNI) form a helical membrane-spanning segment. Topologically, residues 269–593 (TNLVVHETTN…RDGDHLFFSW (325 aa)) are cytoplasmic. Residue 350–470 (LFQGVSDKLV…VVVFSNFVLY (121 aa)) participates in a nucleoside 3',5'-cyclic phosphate binding. In terms of domain architecture, KHA spans 522 to 593 (RVSIHEHLLN…RDGDHLFFSW (72 aa)).

It belongs to the potassium channel family. Plant (TC 1.A.1.4) subfamily.

The protein localises to the membrane. Its function is as follows. Probable inward-rectifying potassium channel. Assuming opened or closed conformations in response to the voltage difference across the membrane, the channel is activated by hyperpolarization. In Oryza sativa subsp. japonica (Rice), this protein is Potassium channel KAT6.